The chain runs to 336 residues: 3-isopropylmalate dehydrogenase (336 aa).

4 residues coordinate substrate: Arg87, Arg97, Arg121, and Asp211. Positions 211, 235, and 239 each coordinate Mg(2+). 271 to 283 (GSAPDIAGQGIAD) serves as a coordination point for NAD(+).

The protein belongs to the isocitrate and isopropylmalate dehydrogenases family. LeuB type 2 subfamily. In terms of assembly, homodimer. Mg(2+) serves as cofactor. The cofactor is Mn(2+).

It localises to the cytoplasm. The enzyme catalyses (2R,3S)-3-isopropylmalate + NAD(+) = 4-methyl-2-oxopentanoate + CO2 + NADH. It functions in the pathway amino-acid biosynthesis; L-leucine biosynthesis; L-leucine from 3-methyl-2-oxobutanoate: step 3/4. Functionally, catalyzes the oxidation of 3-carboxy-2-hydroxy-4-methylpentanoate (3-isopropylmalate) to 3-carboxy-4-methyl-2-oxopentanoate. The product decarboxylates to 4-methyl-2 oxopentanoate. The chain is 3-isopropylmalate dehydrogenase from Mycobacterium leprae (strain Br4923).